The chain runs to 394 residues: UPF0229 protein RBAM_009260 (394 aa).

It belongs to the UPF0229 family.

The protein is UPF0229 protein RBAM_009260 of Bacillus velezensis (strain DSM 23117 / BGSC 10A6 / LMG 26770 / FZB42) (Bacillus amyloliquefaciens subsp. plantarum).